We begin with the raw amino-acid sequence, 573 residues long: Urease subunit alpha 1 (573 aa).

The Urease domain occupies 136–573 (GGIDTHVHFI…LPLAQRYFLF (438 aa)). Positions 141, 143, and 224 each coordinate Ni(2+). K224 is subject to N6-carboxylysine. Residue H226 participates in substrate binding. Positions 253 and 279 each coordinate Ni(2+). H327 acts as the Proton donor in catalysis. D367 is a Ni(2+) binding site.

It belongs to the metallo-dependent hydrolases superfamily. Urease alpha subunit family. As to quaternary structure, may form a heterohexamer of 3 UreC (alpha) and 3 UreAB (gamma/beta) subunits. May also form a heterotrimer of UreA (gamma), UreB (beta) and UreC (alpha) subunits. Three heterotrimers associate to form the active enzyme. Ni cation serves as cofactor. In terms of processing, carboxylation allows a single lysine to coordinate two nickel ions.

Its subcellular location is the cytoplasm. It carries out the reaction urea + 2 H2O + H(+) = hydrogencarbonate + 2 NH4(+). It participates in nitrogen metabolism; urea degradation; CO(2) and NH(3) from urea (urease route): step 1/1. This Streptomyces coelicolor (strain ATCC BAA-471 / A3(2) / M145) protein is Urease subunit alpha 1.